Reading from the N-terminus, the 85-residue chain is Photosystem I reaction center subunit PsaK (85 aa).

Helical transmembrane passes span 13–33 (VSWT…AIAI) and 59–79 (GAML…ILGL).

It belongs to the PsaG/PsaK family.

It localises to the cellular thylakoid membrane. The sequence is that of Photosystem I reaction center subunit PsaK from Synechococcus sp. (strain WH7803).